We begin with the raw amino-acid sequence, 706 residues long: Probable E3 ubiquitin ligase complex SCF subunit sconB (706 aa).

Residues 1–12 (MQSDDRSVREGS) are compositionally biased toward basic and acidic residues. Disordered stretches follow at residues 1 to 43 (MQSD…LLQQ) and 56 to 76 (TAEE…SFGA). Residues 34–43 (QQQQQQLLQQ) are compositionally biased toward low complexity. Residues 203-249 (IDFLTALPPEISFKILCYLDTTSLCKAAQVSSRWRALADDDVVWHRM) form the F-box domain. WD repeat units follow at residues 377–414 (GHTN…ELRT), 417–456 (GHQS…STYT), 458–494 (HRGG…TFLL), 496–537 (GHTD…RTFH), 589–632 (ATET…CLRT), 635–672 (GHLE…CERT), and 675–706 (GHSG…SFRN).

The protein belongs to the WD repeat MET30/SCONB/SCON-2 family. As to quaternary structure, component of the SCF(sconB) E3 ubiquitin ligase complex.

It functions in the pathway protein modification; protein ubiquitination. Its function is as follows. Component of the SCF(sconB) E3 ubiquitin ligase complex involved in the regulation of sulfur metabolite repression, probably by mediating the inactivation or degradation of the metR transcription factor. The sequence is that of Probable E3 ubiquitin ligase complex SCF subunit sconB (sconB) from Aspergillus flavus (strain ATCC 200026 / FGSC A1120 / IAM 13836 / NRRL 3357 / JCM 12722 / SRRC 167).